The sequence spans 335 residues: Ficolin-1 (335 aa).

An N-terminal signal peptide occupies residues 1–17 (MWWPMLWAFPVLLCLCS). Positions 47–114 (SCPSFPGPPG…TASPLGQKEL (68 aa)) are disordered. Residues 50 to 88 (SFPGPPGPKGEPGSPAGRGERGLQGSPGKMGPPGSKGEP) form the Collagen-like domain. The segment covering 75–88 (SPGKMGPPGSKGEP) has biased composition (low complexity). Residues 117–335 (ALCRRGPRSC…KVAEMKIRAS (219 aa)) form the Fibrinogen C-terminal domain. 2 disulfide bridges follow: C119/C147 and C126/C154. The tract at residues 123-162 (PRSCKDLLTRGIFLTGWYTIYLPDCRPLTVLCDMDVDGGG) is a domain; contributes to trimerization. Positions 163 to 251 (WTVFQRRVDG…LTLGQFLEGT (89 aa)) are b domain; contributes to trimerization. Position 270 (D270) interacts with Ca(2+). N271 carries an N-linked (GlcNAc...) asparagine glycan. Residue D272 participates in Ca(2+) binding. C279 and C292 are joined by a disulfide. 291–293 (DCH) is an a carbohydrate binding site. Positions 326–335 (KVAEMKIRAS) are p domain.

It belongs to the ficolin lectin family. As to quaternary structure, homotrimer. Interacts with elastin/ELN. Interacts (via Fibrinogen C-terminal domain) with FFAR2. Interacts with CRP; may regulate monocyte activation by FCN1.

The protein resides in the secreted. The protein localises to the cell membrane. Functionally, extracellular lectin functioning as a pattern-recognition receptor in innate immunity. Binds the sugar moieties of pathogen-associated molecular patterns (PAMPs) displayed on microbes and activates the lectin pathway of the complement system. May also activate monocytes through a G protein-coupled receptor, FFAR2, inducing the secretion of interleukin-8/IL-8. Binds preferentially to 9-O-acetylated 2-6-linked sialic acid derivatives and to various glycans containing sialic acid engaged in a 2-3 linkage. This is Ficolin-1 (Fcn1) from Rattus norvegicus (Rat).